A 445-amino-acid polypeptide reads, in one-letter code: Phosphoglucosamine mutase (445 aa).

The active-site Phosphoserine intermediate is the serine 102. Serine 102, aspartate 241, aspartate 243, and aspartate 245 together coordinate Mg(2+). Residue serine 102 is modified to Phosphoserine.

This sequence belongs to the phosphohexose mutase family. Requires Mg(2+) as cofactor. Activated by phosphorylation.

The catalysed reaction is alpha-D-glucosamine 1-phosphate = D-glucosamine 6-phosphate. In terms of biological role, catalyzes the conversion of glucosamine-6-phosphate to glucosamine-1-phosphate. The sequence is that of Phosphoglucosamine mutase from Salmonella dublin (strain CT_02021853).